The sequence spans 365 residues: Annexin B22 (365 aa).

4 Annexin repeats span residues 34–105 (FSAS…QLIV), 106–185 (DTPY…SLVQ), 211–283 (ELAE…AVLR), and 287–358 (DRPS…VLMG). Positions 47, 49, 51, 52, 54, 91, 119, 121, 123, 126, 169, 171, 172, 177, 273, 300, 302, 303, 304, and 344 each coordinate Ca(2+).

Belongs to the annexin family. Homodimer.

It is found in the tegument. Its subcellular location is the secreted. It localises to the extracellular exosome. The protein localises to the host cell. Functionally, involved in reproduction of the worm. Involved in host-parasite interaction. Delivered into the host cell by means of parasite exosomes. Binds to acidic phospholipid membranes in a calcium-dependent manner in vitro. Causes aggregation of liposomes in the presence of calcium, but not in its absence. Likely to promote membrane fusion. May provide structural integrity within the tegument. This Schistosoma mansoni (Blood fluke) protein is Annexin B22.